The primary structure comprises 153 residues: Large ribosomal subunit protein bL9 (153 aa).

The protein belongs to the bacterial ribosomal protein bL9 family.

Binds to the 23S rRNA. This Koribacter versatilis (strain Ellin345) protein is Large ribosomal subunit protein bL9.